The following is a 416-amino-acid chain: NADH-quinone oxidoreductase subunit D (416 aa).

The protein belongs to the complex I 49 kDa subunit family. NDH-1 is composed of 14 different subunits. Subunits NuoB, C, D, E, F, and G constitute the peripheral sector of the complex.

It is found in the cell inner membrane. It carries out the reaction a quinone + NADH + 5 H(+)(in) = a quinol + NAD(+) + 4 H(+)(out). In terms of biological role, NDH-1 shuttles electrons from NADH, via FMN and iron-sulfur (Fe-S) centers, to quinones in the respiratory chain. The immediate electron acceptor for the enzyme in this species is believed to be ubiquinone. Couples the redox reaction to proton translocation (for every two electrons transferred, four hydrogen ions are translocated across the cytoplasmic membrane), and thus conserves the redox energy in a proton gradient. The sequence is that of NADH-quinone oxidoreductase subunit D from Rhodopseudomonas palustris (strain BisB5).